The following is a 243-amino-acid chain: Type III pantothenate kinase (243 aa).

6 to 13 (DIGNTVAK) provides a ligand contact to ATP. Substrate is bound by residues Tyr86 and 93-96 (GYDR). Asp95 acts as the Proton acceptor in catalysis. Asp116 is a binding site for K(+). Thr119 provides a ligand contact to ATP. Residue Thr171 coordinates substrate.

It belongs to the type III pantothenate kinase family. As to quaternary structure, homodimer. Requires NH4(+) as cofactor. K(+) serves as cofactor.

It is found in the cytoplasm. It carries out the reaction (R)-pantothenate + ATP = (R)-4'-phosphopantothenate + ADP + H(+). Its pathway is cofactor biosynthesis; coenzyme A biosynthesis; CoA from (R)-pantothenate: step 1/5. Its function is as follows. Catalyzes the phosphorylation of pantothenate (Pan), the first step in CoA biosynthesis. The protein is Type III pantothenate kinase of Bacteroides fragilis (strain ATCC 25285 / DSM 2151 / CCUG 4856 / JCM 11019 / LMG 10263 / NCTC 9343 / Onslow / VPI 2553 / EN-2).